A 419-amino-acid chain; its full sequence is Serine hydroxymethyltransferase (419 aa).

Residues Leu-118 and 122–124 each bind (6S)-5,6,7,8-tetrahydrofolate; that span reads GHL. Lys-226 is subject to N6-(pyridoxal phosphate)lysine. Glu-242 contributes to the (6S)-5,6,7,8-tetrahydrofolate binding site.

It belongs to the SHMT family. In terms of assembly, homodimer. It depends on pyridoxal 5'-phosphate as a cofactor.

Its subcellular location is the cytoplasm. It carries out the reaction (6R)-5,10-methylene-5,6,7,8-tetrahydrofolate + glycine + H2O = (6S)-5,6,7,8-tetrahydrofolate + L-serine. The protein operates within one-carbon metabolism; tetrahydrofolate interconversion. It functions in the pathway amino-acid biosynthesis; glycine biosynthesis; glycine from L-serine: step 1/1. In terms of biological role, catalyzes the reversible interconversion of serine and glycine with tetrahydrofolate (THF) serving as the one-carbon carrier. This reaction serves as the major source of one-carbon groups required for the biosynthesis of purines, thymidylate, methionine, and other important biomolecules. Also exhibits THF-independent aldolase activity toward beta-hydroxyamino acids, producing glycine and aldehydes, via a retro-aldol mechanism. The chain is Serine hydroxymethyltransferase from Metamycoplasma arthritidis (strain 158L3-1) (Mycoplasma arthritidis).